The chain runs to 126 residues: Methylglyoxal synthase (126 aa).

Residues 1 to 126 (MKALALIAHD…IAWIRKGTPQ (126 aa)) form the MGS-like domain. Residues H9, K13, 35 to 38 (TGTT), and 55 to 56 (SG) each bind substrate. D61 functions as the Proton donor/acceptor in the catalytic mechanism. H88 contacts substrate.

It belongs to the methylglyoxal synthase family.

It catalyses the reaction dihydroxyacetone phosphate = methylglyoxal + phosphate. Catalyzes the formation of methylglyoxal from dihydroxyacetone phosphate. In Thermus thermophilus (strain ATCC BAA-163 / DSM 7039 / HB27), this protein is Methylglyoxal synthase.